The primary structure comprises 626 residues: ABC transporter G family member 8 (626 aa).

The 245-residue stretch at 56–300 folds into the ABC transporter domain; the sequence is VNLDNKTENS…SLGYPCPNNT (245 aa). 90–97 is a binding site for ATP; it reads GPSGSGKS. The 249-residue stretch at 373–621 folds into the ABC transmembrane type-2 domain; sequence GNALSRVITA…SLSYFALHFL (249 aa). 7 helical membrane passes run 376–396, 409–429, 447–467, 485–505, 515–535, 543–563, and 600–620; these read LSRV…FAGL, TLFF…TLFL, FPYF…VTLV, FFFA…FISS, LTFS…GFYV, AFGW…VVIN, and FGVL…ALHF.

It belongs to the ABC transporter superfamily. ABCG family. Eye pigment precursor importer (TC 3.A.1.204) subfamily.

It localises to the membrane. In Dictyostelium discoideum (Social amoeba), this protein is ABC transporter G family member 8 (abcG8).